Here is a 214-residue protein sequence, read N- to C-terminus: Zinc finger protein 11 (214 aa).

A disordered region spans residues 1–27 (MKRTHLASFSNRDKTQEEEGEDGNGDN). The segment at 49 to 71 (YTCSFCRREFRSAQALGGHMNVH) adopts a C2H2-type zinc-finger fold. Positions 72–79 (RRDRAKLR) match the Nuclear localization signal motif. The disordered stretch occupies residues 89 to 130 (HHHTPIANPNPNFSSSSSSSTTTAHLEPSLTNQRSKTTPFPS). Low complexity predominate over residues 102-111 (SSSSSSSTTT). The span at 117–128 (SLTNQRSKTTPF) shows a compositional bias: polar residues.

Expressed in roots, stems, axillary buds and flowers.

It is found in the nucleus. Probable transcription factor that may regulate cell division and growth. In Arabidopsis thaliana (Mouse-ear cress), this protein is Zinc finger protein 11.